We begin with the raw amino-acid sequence, 299 residues long: Probable inactive heme oxygenase 2, chloroplastic (299 aa).

Over residues 1 to 15 the composition is skewed to low complexity; that stretch reads MASLLRPTPLLSTPR. Disordered stretches follow at residues 1–20, 45–70, and 96–126; these read MASL…LTHS, LCRS…KQYP, and DLSE…EETW. A chloroplast-targeting transit peptide spans 1–83; the sequence is MASLLRPTPL…IGITEEMRFV (83 aa). Polar residues predominate over residues 46–57; sequence CRSTPTPSQQKA. Positions 58–67 are enriched in basic residues; that stretch reads SQRKRTRYRK. Acidic residues predominate over residues 105–122; sequence EKEEEEEEEDDDDDDEVK.

The protein belongs to the heme oxygenase family. As to expression, widely expressed at low levels.

The protein localises to the plastid. Its subcellular location is the chloroplast. Its function is as follows. Probable inactive heme oxygenase. Binds protoporphyrin IX, a precursor for both heme and chlorophyll biosynthesis. Plays a minor role in phytochrome assembly and photomorphogenesis. The chain is Probable inactive heme oxygenase 2, chloroplastic (HO2) from Arabidopsis thaliana (Mouse-ear cress).